The following is a 102-amino-acid chain: Small ribosomal subunit protein uS10 (102 aa).

Belongs to the universal ribosomal protein uS10 family. As to quaternary structure, part of the 30S ribosomal subunit.

Involved in the binding of tRNA to the ribosomes. In Trichlorobacter lovleyi (strain ATCC BAA-1151 / DSM 17278 / SZ) (Geobacter lovleyi), this protein is Small ribosomal subunit protein uS10.